The chain runs to 721 residues: Protein mu-NS (721 aa).

An interaction with sigma-NS region spans residues 1 to 13; it reads MASFKGFSANTVP. Residues 1-38 form an RNA-binding region; that stretch reads MASFKGFSANTVPVSKTRKDTSSLTATPGLRAPSMSSP. The interaction with mu-2 stretch occupies residues 14 to 40; it reads VSKTRKDTSSLTATPGLRAPSMSSPVD. The disordered stretch occupies residues 17–37; that stretch reads TRKDTSSLTATPGLRAPSMSS. Residues 471-721 form an involved in the formation of factory-like inclusions region; it reads QSDTVDGIKL…IDFSVPADEL (251 aa). 2 coiled-coil regions span residues 523–556 and 632–686; these read LLSQ…ADVK and KQAH…NQRQ.

Belongs to the orthoreovirus mu-NS protein family. In terms of assembly, interacts with mu-2. Interacts with sigma-NS; in viral factories. Interacts with the inner capsid proteins lambda-1 and sigma-2, and outer capsid protein lambda-2; in viral factories. In terms of processing, the N-terminus is blocked.

The protein localises to the host cytoplasm. Non-structural protein implicated with protein sigma-NS in forming the matrix of viral factories, which are large inclusions in the host cytoplasm where replication intermediates are assembled and viral RNA replication takes place. Together with mu-2, recruits the other core proteins to these factories. This Mammalia (T2J) protein is Protein mu-NS (M3).